A 333-amino-acid polypeptide reads, in one-letter code: uncharacterized protein (333 aa).

To bacterial alkanal monooxygenase alpha and beta chains.

This is an uncharacterized protein from Bacillus subtilis (strain 168).